A 146-amino-acid chain; its full sequence is UPF0260 protein Swit_2819 (146 aa).

The protein belongs to the UPF0260 family.

The sequence is that of UPF0260 protein Swit_2819 from Rhizorhabdus wittichii (strain DSM 6014 / CCUG 31198 / JCM 15750 / NBRC 105917 / EY 4224 / RW1) (Sphingomonas wittichii).